The primary structure comprises 545 residues: Esterase-5C (545 aa).

The first 19 residues, 1–19 (MLAARLIILLSFYWLSASA), serve as a signal peptide directing secretion. A disulfide bond links cysteine 84 and cysteine 103. The N-linked (GlcNAc...) asparagine glycan is linked to asparagine 113. The active-site Acyl-ester intermediate is the serine 207. Cysteine 259 and cysteine 271 are disulfide-bonded. A glycan (N-linked (GlcNAc...) asparagine) is linked at asparagine 421. Histidine 467 acts as the Charge relay system in catalysis. Residue asparagine 507 is glycosylated (N-linked (GlcNAc...) asparagine). Cysteine 515 and cysteine 536 are oxidised to a cystine.

Belongs to the type-B carboxylesterase/lipase family.

Its subcellular location is the secreted. It carries out the reaction a carboxylic ester + H2O = an alcohol + a carboxylate + H(+). The chain is Esterase-5C (Est-5C) from Drosophila miranda (Fruit fly).